We begin with the raw amino-acid sequence, 281 residues long: Protein synthesis inhibitor I (281 aa).

At A2 the chain carries N-acetylalanine. E175 is a catalytic residue.

It belongs to the ribosome-inactivating protein family. Type 1 RIP subfamily.

It localises to the cytoplasm. It carries out the reaction Endohydrolysis of the N-glycosidic bond at one specific adenosine on the 28S rRNA.. Functionally, inhibits the elongation phase of protein synthesis. It inactivates fungal ribosomes even more effectively than mammalian ribosomes and is thought to function as a constitutive antifungal agent in plants. This chain is Protein synthesis inhibitor I (RIP30), found in Hordeum vulgare (Barley).